Consider the following 205-residue polypeptide: Imidazole glycerol phosphate synthase subunit HisH (205 aa).

One can recognise a Glutamine amidotransferase type-1 domain in the interval methionine 1 to lysine 205. The active-site Nucleophile is cysteine 79. Catalysis depends on residues histidine 181 and glutamate 183.

Heterodimer of HisH and HisF.

The protein resides in the cytoplasm. It carries out the reaction 5-[(5-phospho-1-deoxy-D-ribulos-1-ylimino)methylamino]-1-(5-phospho-beta-D-ribosyl)imidazole-4-carboxamide + L-glutamine = D-erythro-1-(imidazol-4-yl)glycerol 3-phosphate + 5-amino-1-(5-phospho-beta-D-ribosyl)imidazole-4-carboxamide + L-glutamate + H(+). The enzyme catalyses L-glutamine + H2O = L-glutamate + NH4(+). The protein operates within amino-acid biosynthesis; L-histidine biosynthesis; L-histidine from 5-phospho-alpha-D-ribose 1-diphosphate: step 5/9. IGPS catalyzes the conversion of PRFAR and glutamine to IGP, AICAR and glutamate. The HisH subunit catalyzes the hydrolysis of glutamine to glutamate and ammonia as part of the synthesis of IGP and AICAR. The resulting ammonia molecule is channeled to the active site of HisF. The polypeptide is Imidazole glycerol phosphate synthase subunit HisH (Dehalococcoides mccartyi (strain ATCC BAA-2266 / KCTC 15142 / 195) (Dehalococcoides ethenogenes (strain 195))).